The sequence spans 847 residues: Beta-hexosaminidase (847 aa).

Disulfide bonds link cysteine 31–cysteine 40, cysteine 377–cysteine 385, and cysteine 484–cysteine 530. Glutamate 519 (proton donor) is an active-site residue.

The protein belongs to the glycosyl hydrolase 20 family.

The catalysed reaction is Hydrolysis of terminal non-reducing N-acetyl-D-hexosamine residues in N-acetyl-beta-D-hexosaminides.. It functions in the pathway glycan degradation; chitin degradation. Its function is as follows. Hydrolysis of terminal, non-reducing N-acetyl-beta-D-glucosamine residues in chitobiose and higher analogs, and in glycoproteins. The protein is Beta-hexosaminidase (hex) of Vibrio vulnificus.